The primary structure comprises 277 residues: Large ribosomal subunit protein uL2 (277 aa).

Disordered stretches follow at residues 37-60 and 223-264; these read KNSTAGRNNNGHITTRHKGGGHKH and VVMN…NKRT. Residues 39–49 are compositionally biased toward polar residues; it reads STAGRNNNGHI. Residues 50–60 show a composition bias toward basic residues; the sequence is TTRHKGGGHKH. A compositionally biased stretch (basic and acidic residues) spans 229–244; it reads DHPHGGGEGRTGEARE.

It belongs to the universal ribosomal protein uL2 family. As to quaternary structure, part of the 50S ribosomal subunit. Forms a bridge to the 30S subunit in the 70S ribosome.

Its function is as follows. One of the primary rRNA binding proteins. Required for association of the 30S and 50S subunits to form the 70S ribosome, for tRNA binding and peptide bond formation. It has been suggested to have peptidyltransferase activity; this is somewhat controversial. Makes several contacts with the 16S rRNA in the 70S ribosome. The polypeptide is Large ribosomal subunit protein uL2 (Neisseria meningitidis serogroup B (strain ATCC BAA-335 / MC58)).